Consider the following 306-residue polypeptide: Ribonuclease Z (306 aa).

Residues His-63, His-65, Asp-67, His-68, His-141, Asp-208, and His-266 each contribute to the Zn(2+) site. The active-site Proton acceptor is Asp-67.

The protein belongs to the RNase Z family. In terms of assembly, homodimer. Zn(2+) is required as a cofactor.

The enzyme catalyses Endonucleolytic cleavage of RNA, removing extra 3' nucleotides from tRNA precursor, generating 3' termini of tRNAs. A 3'-hydroxy group is left at the tRNA terminus and a 5'-phosphoryl group is left at the trailer molecule.. Zinc phosphodiesterase, which displays some tRNA 3'-processing endonuclease activity. Probably involved in tRNA maturation, by removing a 3'-trailer from precursor tRNA. The sequence is that of Ribonuclease Z from Chlamydia caviae (strain ATCC VR-813 / DSM 19441 / 03DC25 / GPIC) (Chlamydophila caviae).